The sequence spans 346 residues: Small ribosomal subunit biogenesis GTPase RsgA 1 (346 aa).

The 156-residue stretch at 93–248 folds into the CP-type G domain; sequence EEQLIAANFD…IIDTPGMREF (156 aa). GTP is bound by residues 138–141 and 190–198; these read TKAD and GSSGVGKSS. 4 residues coordinate Zn(2+): Cys-271, Cys-276, His-278, and Cys-284.

The protein belongs to the TRAFAC class YlqF/YawG GTPase family. RsgA subfamily. In terms of assembly, monomer. Associates with 30S ribosomal subunit, binds 16S rRNA. Zn(2+) is required as a cofactor.

The protein resides in the cytoplasm. Its function is as follows. One of several proteins that assist in the late maturation steps of the functional core of the 30S ribosomal subunit. Helps release RbfA from mature subunits. May play a role in the assembly of ribosomal proteins into the subunit. Circularly permuted GTPase that catalyzes slow GTP hydrolysis, GTPase activity is stimulated by the 30S ribosomal subunit. This Listeria innocua serovar 6a (strain ATCC BAA-680 / CLIP 11262) protein is Small ribosomal subunit biogenesis GTPase RsgA 1.